The chain runs to 340 residues: Entry-fusion complex protein OPG094 (340 aa).

The segment at 1 to 20 is disordered; the sequence is MGGGVSVELPKRDPPPGVPT. Residue Gly-2 is the site of N-myristoyl glycine; by host attachment. At 2 to 319 the chain is on the virion surface side; the sequence is GGGVSVELPK…VQHNIKHSFD (318 aa). The helical; Signal-anchor for type II membrane protein transmembrane segment at 320 to 340 threads the bilayer; the sequence is LKLHLISLLSLLVIWILIVAI.

The protein belongs to the orthopoxvirus OPG086 family. Interacts with OPG143. Component of the entry fusion complex (EFC) composed of OPG053, OPG076, OPG086, OPG094, OPG095, OPG099, OPG107, OPG143, OPG104, OPG147 and OPG155. Except for OPG095 and OPG053, each of the EFC proteins is required for assembly or stability of the complex. In terms of processing, unglycosylated because produced in viral factories instead of the classic ER -Golgi route.

The protein resides in the virion membrane. Its function is as follows. Component of the entry fusion complex (EFC), which consists of 11 proteins. During cell infection, this complex mediates entry of the virion core into the host cytoplasm by a two-step mechanism consisting of lipid mixing of the viral and cellular membranes and subsequent pore formation. This is Entry-fusion complex protein OPG094 (OPG094) from Vaccinia virus (strain Copenhagen) (VACV).